The primary structure comprises 173 residues: Crossover junction endodeoxyribonuclease RuvC (173 aa).

Active-site residues include Asp-8, Glu-67, and Asp-139. Mg(2+) contacts are provided by Asp-8, Glu-67, and Asp-139.

It belongs to the RuvC family. As to quaternary structure, homodimer which binds Holliday junction (HJ) DNA. The HJ becomes 2-fold symmetrical on binding to RuvC with unstacked arms; it has a different conformation from HJ DNA in complex with RuvA. In the full resolvosome a probable DNA-RuvA(4)-RuvB(12)-RuvC(2) complex forms which resolves the HJ. Mg(2+) is required as a cofactor.

The protein resides in the cytoplasm. The enzyme catalyses Endonucleolytic cleavage at a junction such as a reciprocal single-stranded crossover between two homologous DNA duplexes (Holliday junction).. Functionally, the RuvA-RuvB-RuvC complex processes Holliday junction (HJ) DNA during genetic recombination and DNA repair. Endonuclease that resolves HJ intermediates. Cleaves cruciform DNA by making single-stranded nicks across the HJ at symmetrical positions within the homologous arms, yielding a 5'-phosphate and a 3'-hydroxyl group; requires a central core of homology in the junction. The consensus cleavage sequence is 5'-(A/T)TT(C/G)-3'. Cleavage occurs on the 3'-side of the TT dinucleotide at the point of strand exchange. HJ branch migration catalyzed by RuvA-RuvB allows RuvC to scan DNA until it finds its consensus sequence, where it cleaves and resolves the cruciform DNA. This Salmonella choleraesuis (strain SC-B67) protein is Crossover junction endodeoxyribonuclease RuvC.